Reading from the N-terminus, the 595-residue chain is Aspartate--tRNA ligase (595 aa).

E176 provides a ligand contact to L-aspartate. Residues 200–203 (QIFK) are aspartate. R222 is an L-aspartate binding site. ATP is bound by residues 222 to 224 (RDE) and Q231. H450 lines the L-aspartate pocket. Position 484 (E484) interacts with ATP. L-aspartate is bound at residue R491. 536–539 (GLDR) is a binding site for ATP.

Belongs to the class-II aminoacyl-tRNA synthetase family. Type 1 subfamily. In terms of assembly, homodimer.

Its subcellular location is the cytoplasm. It carries out the reaction tRNA(Asp) + L-aspartate + ATP = L-aspartyl-tRNA(Asp) + AMP + diphosphate. In terms of biological role, catalyzes the attachment of L-aspartate to tRNA(Asp) in a two-step reaction: L-aspartate is first activated by ATP to form Asp-AMP and then transferred to the acceptor end of tRNA(Asp). This is Aspartate--tRNA ligase from Halalkalibacterium halodurans (strain ATCC BAA-125 / DSM 18197 / FERM 7344 / JCM 9153 / C-125) (Bacillus halodurans).